The following is a 135-amino-acid chain: Nucleoside diphosphate kinase (135 aa).

K9, Y57, R85, T91, R102, and N112 together coordinate ATP. The active-site Pros-phosphohistidine intermediate is the H115.

Belongs to the NDK family. In terms of assembly, homotetramer. Requires Mg(2+) as cofactor.

The protein localises to the cytoplasm. It catalyses the reaction a 2'-deoxyribonucleoside 5'-diphosphate + ATP = a 2'-deoxyribonucleoside 5'-triphosphate + ADP. The catalysed reaction is a ribonucleoside 5'-diphosphate + ATP = a ribonucleoside 5'-triphosphate + ADP. Major role in the synthesis of nucleoside triphosphates other than ATP. The ATP gamma phosphate is transferred to the NDP beta phosphate via a ping-pong mechanism, using a phosphorylated active-site intermediate. This is Nucleoside diphosphate kinase from Thermoanaerobacter pseudethanolicus (strain ATCC 33223 / 39E) (Clostridium thermohydrosulfuricum).